The sequence spans 352 residues: NAD-dependent protein deacetylase sirtuin-2 (352 aa).

Serine 16 is modified (phosphoserine). The Deacetylase sirtuin-type domain maps to 20–301 (RLLDELTLEG…LALAELLGWK (282 aa)). NAD(+)-binding positions include 48–52 (AGIST) and 58–60 (DFR). Position 63 is a phosphoserine (serine 63). Residue 130 to 133 (QNID) participates in NAD(+) binding. Histidine 150 acts as the Proton acceptor in catalysis. Cysteine 158 and cysteine 163 together coordinate Zn(2+). Position 170 is a phosphoserine (serine 170). Zn(2+) is bound by residues cysteine 184 and cysteine 187. NAD(+) is bound by residues 225 to 226 (TS), 249 to 251 (NKE), and cysteine 287. Residues 314 to 352 (SIDAQSGAGVPNPSTSASPKKSPPPAKDEARTTEREKPQ) are disordered. A compositionally biased stretch (low complexity) spans 324–333 (PNPSTSASPK). Serine 331 and serine 335 each carry phosphoserine. Residues 339-352 (AKDEARTTEREKPQ) show a composition bias toward basic and acidic residues.

The protein belongs to the sirtuin family. Class I subfamily. Interacts with CDC20, FOXO3 and FZR1. Associates with microtubules in primary cortical mature neurons. Homotrimer. Interacts (via both phosphorylated, unphosphorylated, active or inactive forms) with HDAC6; the interaction is necessary for the complex to interact with alpha-tubulin, suggesting that these proteins belong to a large complex that deacetylates the cytoskeleton. Interacts with FOXO1; the interaction is disrupted upon serum-starvation or oxidative stress, leading to increased level of acetylated FOXO1 and induction of autophagy. Interacts with RELA; the interaction occurs in the cytoplasm and is increased in a TNF-alpha-dependent manner. Interacts with HOXA10; the interaction is direct. Interacts with YWHAB and YWHAG; the interactions occur in a AKT-dependent manner and increase SIRT2-dependent TP53 deacetylation. Interacts with MAPK1/ERK2 and MAPK3/ERK1; the interactions increase SIRT2 stability and deacetylation activity. Interacts (phosphorylated form) with KMT5A isoform 2; the interaction is direct, stimulates KMT5A-mediated methyltransferase activity on histone at 'Lys-20' (H4K20me1) and is increased in a H(2)O(2)-induced oxidative stress-dependent manner. Interacts with G6PD; the interaction is enhanced by H(2)O(2) treatment. Interacts with a G1/S-specific cyclin E-CDK2 complex. Interacts with AURKA, CDK5R1 (p35 form) and CDK5 and HIF1A. Interacts with the tRNA ligase SARS1; recruited to the VEGFA promoter via interaction with SARS1. Interacts with BEX4; negatively regulates alpha-tubulin deacetylation by SIRT2. Interacts with MORN3; the interaction enhances the ubiquitination of p53/TP53. It depends on Zn(2+) as a cofactor. Phosphorylated at phosphoserine and phosphothreonine. Phosphorylated at Ser-331 by a mitotic kinase CDK1/cyclin B at the G2/M transition; phosphorylation regulates the delay in cell-cycle progression. Phosphorylated at Ser-331 by a mitotic kinase G1/S-specific cyclin E/Cdk2 complex; phosphorylation inactivates SIRT2-mediated alpha-tubulin deacetylation and thereby negatively regulates cell adhesion, cell migration and neurite outgrowth during neuronal differentiation. Phosphorylated by cyclin A/Cdk2 and p35-Cdk5 complexes and to a lesser extent by the cyclin D3/Cdk4 and cyclin B/Cdk1, in vitro. Dephosphorylated at Ser-331 by CDC14A and CDC14B around early anaphase. Post-translationally, acetylated by EP300; acetylation leads both to the decreased of SIRT2-mediated alpha-tubulin deacetylase activity and SIRT2-mediated down-regulation of TP53 transcriptional activity. In terms of processing, ubiquitinated.

The protein resides in the nucleus. Its subcellular location is the cytoplasm. The protein localises to the perinuclear region. It is found in the cytoskeleton. It localises to the microtubule organizing center. The protein resides in the centrosome. Its subcellular location is the centriole. The protein localises to the spindle. It is found in the midbody. It localises to the chromosome. The protein resides in the perikaryon. Its subcellular location is the cell projection. The protein localises to the growth cone. It is found in the myelin membrane. The enzyme catalyses N(6)-acetyl-L-lysyl-[protein] + NAD(+) + H2O = 2''-O-acetyl-ADP-D-ribose + nicotinamide + L-lysyl-[protein]. It carries out the reaction N(6)-tetradecanoyl-L-lysyl-[protein] + NAD(+) + H2O = 2''-O-tetradecanoyl-ADP-D-ribose + nicotinamide + L-lysyl-[protein]. The catalysed reaction is N(6)-hexadecanoyl-L-lysyl-[protein] + NAD(+) + H2O = 2''-O-hexadecanoyl-ADP-D-ribose + nicotinamide + L-lysyl-[protein]. With respect to regulation, inhibited by Sirtinol, A3 and M15 small molecules. Inhibited by nicotinamide. Inhibited by a macrocyclic peptide inhibitor S2iL5. Inhibited by EP300-induced acetylation. Functionally, NAD-dependent protein deacetylase, which deacetylates internal lysines on histone and alpha-tubulin as well as many other proteins such as key transcription factors. Participates in the modulation of multiple and diverse biological processes such as cell cycle control, genomic integrity, microtubule dynamics, cell differentiation, metabolic networks, and autophagy. Plays a major role in the control of cell cycle progression and genomic stability. Functions in the antephase checkpoint preventing precocious mitotic entry in response to microtubule stress agents, and hence allowing proper inheritance of chromosomes. Positively regulates the anaphase promoting complex/cyclosome (APC/C) ubiquitin ligase complex activity by deacetylating CDC20 and FZR1, then allowing progression through mitosis. Associates both with chromatin at transcriptional start sites (TSSs) and enhancers of active genes. Plays a role in cell cycle and chromatin compaction through epigenetic modulation of the regulation of histone H4 'Lys-20' methylation (H4K20me1) during early mitosis. Specifically deacetylates histone H4 at 'Lys-16' (H4K16ac) between the G2/M transition and metaphase enabling H4K20me1 deposition by KMT5A leading to ulterior levels of H4K20me2 and H4K20me3 deposition throughout cell cycle, and mitotic S-phase progression. Deacetylates KMT5A modulating KMT5A chromatin localization during the mitotic stress response. Also deacetylates histone H3 at 'Lys-57' (H3K56ac) during the mitotic G2/M transition. During oocyte meiosis progression, may deacetylate histone H4 at 'Lys-16' (H4K16ac) and alpha-tubulin, regulating spindle assembly and chromosome alignment by influencing microtubule dynamics and kinetochore function. Deacetylates histone H4 at 'Lys-16' (H4K16ac) at the VEGFA promoter and thereby contributes to regulate expression of VEGFA, a key regulator of angiogenesis. Deacetylates alpha-tubulin at 'Lys-40' and hence controls neuronal motility, oligodendroglial cell arbor projection processes and proliferation of non-neuronal cells. Phosphorylation at Ser-368 by a G1/S-specific cyclin E-CDK2 complex inactivates SIRT2-mediated alpha-tubulin deacetylation, negatively regulating cell adhesion, cell migration and neurite outgrowth during neuronal differentiation. Deacetylates PARD3 and participates in the regulation of Schwann cell peripheral myelination formation during early postnatal development and during postinjury remyelination. Involved in several cellular metabolic pathways. Plays a role in the regulation of blood glucose homeostasis by deacetylating and stabilizing phosphoenolpyruvate carboxykinase PCK1 activity in response to low nutrient availability. Acts as a key regulator in the pentose phosphate pathway (PPP) by deacetylating and activating the glucose-6-phosphate G6PD enzyme, and therefore, stimulates the production of cytosolic NADPH to counteract oxidative damage. Maintains energy homeostasis in response to nutrient deprivation as well as energy expenditure by inhibiting adipogenesis and promoting lipolysis. Attenuates adipocyte differentiation by deacetylating and promoting FOXO1 interaction to PPARG and subsequent repression of PPARG-dependent transcriptional activity. Plays a role in the regulation of lysosome-mediated degradation of protein aggregates by autophagy in neuronal cells. Deacetylates FOXO1 in response to oxidative stress or serum deprivation, thereby negatively regulating FOXO1-mediated autophagy. Deacetylates a broad range of transcription factors and co-regulators regulating target gene expression. Deacetylates transcriptional factor FOXO3 stimulating the ubiquitin ligase SCF(SKP2)-mediated FOXO3 ubiquitination and degradation. Deacetylates HIF1A and therefore promotes HIF1A degradation and inhibition of HIF1A transcriptional activity in tumor cells in response to hypoxia. Deacetylates RELA in the cytoplasm inhibiting NF-kappaB-dependent transcription activation upon TNF-alpha stimulation. Inhibits transcriptional activation by deacetylating p53/TP53 and EP300. Also deacetylates EIF5A. Functions as a negative regulator on oxidative stress-tolerance in response to anoxia-reoxygenation conditions. Plays a role as tumor suppressor. In addition to protein deacetylase activity, also has activity toward long-chain fatty acyl groups and mediates protein-lysine demyristoylation and depalmitoylation of target proteins, such as ARF6 and KRAS, thereby regulating their association with membranes. The chain is NAD-dependent protein deacetylase sirtuin-2 (SIRT2) from Pongo abelii (Sumatran orangutan).